The chain runs to 206 residues: Small ribosomal subunit protein uS4 (206 aa).

The disordered stretch occupies residues Asn-18–Ser-46. An S4 RNA-binding domain is found at Arg-94 to Ala-156.

It belongs to the universal ribosomal protein uS4 family. Part of the 30S ribosomal subunit. Contacts protein S5. The interaction surface between S4 and S5 is involved in control of translational fidelity.

In terms of biological role, one of the primary rRNA binding proteins, it binds directly to 16S rRNA where it nucleates assembly of the body of the 30S subunit. Its function is as follows. With S5 and S12 plays an important role in translational accuracy. The sequence is that of Small ribosomal subunit protein uS4 from Ruegeria sp. (strain TM1040) (Silicibacter sp.).